The primary structure comprises 190 residues: Xanthine phosphoribosyltransferase (190 aa).

Residues Leu-20 and Asn-27 each contribute to the xanthine site. 128–132 (ANGEA) is a binding site for 5-phospho-alpha-D-ribose 1-diphosphate. Xanthine is bound at residue Lys-156.

The protein belongs to the purine/pyrimidine phosphoribosyltransferase family. Xpt subfamily. In terms of assembly, homodimer.

Its subcellular location is the cytoplasm. It carries out the reaction XMP + diphosphate = xanthine + 5-phospho-alpha-D-ribose 1-diphosphate. The protein operates within purine metabolism; XMP biosynthesis via salvage pathway; XMP from xanthine: step 1/1. In terms of biological role, converts the preformed base xanthine, a product of nucleic acid breakdown, to xanthosine 5'-monophosphate (XMP), so it can be reused for RNA or DNA synthesis. This Clostridium botulinum (strain Eklund 17B / Type B) protein is Xanthine phosphoribosyltransferase.